The chain runs to 239 residues: uncharacterized protein (239 aa).

This is an uncharacterized protein from Saccharomyces cerevisiae (strain ATCC 204508 / S288c) (Baker's yeast).